Reading from the N-terminus, the 222-residue chain is Triosephosphate isomerase (222 aa).

9–11 (NYK) lines the substrate pocket. The Electrophile role is filled by histidine 93. Glutamate 141 (proton acceptor) is an active-site residue. Residues isoleucine 146, glycine 181, and 202-203 (AS) contribute to the substrate site.

Belongs to the triosephosphate isomerase family. Homotetramer; dimer of dimers.

It is found in the cytoplasm. It carries out the reaction D-glyceraldehyde 3-phosphate = dihydroxyacetone phosphate. It functions in the pathway carbohydrate biosynthesis; gluconeogenesis. The protein operates within carbohydrate degradation; glycolysis; D-glyceraldehyde 3-phosphate from glycerone phosphate: step 1/1. Its function is as follows. Involved in the gluconeogenesis. Catalyzes stereospecifically the conversion of dihydroxyacetone phosphate (DHAP) to D-glyceraldehyde-3-phosphate (G3P). The protein is Triosephosphate isomerase of Methanosarcina acetivorans (strain ATCC 35395 / DSM 2834 / JCM 12185 / C2A).